The chain runs to 524 residues: Cytochrome P450 4F12 (524 aa).

The next 2 membrane-spanning stretches (helical) occupy residues 19-39 (WLLL…AWTY) and 87-107 (GFTV…PDTI). Cys-468 contributes to the heme binding site.

It belongs to the cytochrome P450 family. The cofactor is heme. In terms of tissue distribution, expressed in small intestine, liver, colon and heart.

The protein localises to the endoplasmic reticulum membrane. It localises to the microsome membrane. The enzyme catalyses an organic molecule + reduced [NADPH--hemoprotein reductase] + O2 = an alcohol + oxidized [NADPH--hemoprotein reductase] + H2O + H(+). The catalysed reaction is (5Z,8Z,11Z,14Z)-eicosatetraenoate + reduced [NADPH--hemoprotein reductase] + O2 = 18-hydroxy-(5Z,8Z,11Z,14Z)-eicosatetraenoate + oxidized [NADPH--hemoprotein reductase] + H2O + H(+). It carries out the reaction (7Z,10Z,13Z,16Z,19Z)-docosapentaenoate + reduced [NADPH--hemoprotein reductase] + O2 = 10,11-epoxy-(7Z,13Z,16Z,19Z)-docosatetraenoate + oxidized [NADPH--hemoprotein reductase] + H2O + H(+). It catalyses the reaction (7Z,10Z,13Z,16Z,19Z)-docosapentaenoate + reduced [NADPH--hemoprotein reductase] + O2 = 13,14-epoxy-(7Z,10Z,16Z,19Z)-docosatetraenoate + oxidized [NADPH--hemoprotein reductase] + H2O + H(+). The enzyme catalyses (7Z,10Z,13Z,16Z,19Z)-docosapentaenoate + reduced [NADPH--hemoprotein reductase] + O2 = 16,17-epoxy-(7Z,10Z,13Z,19Z)-docosatetraenoate + oxidized [NADPH--hemoprotein reductase] + H2O + H(+). The catalysed reaction is (7Z,10Z,13Z,16Z,19Z)-docosapentaenoate + reduced [NADPH--hemoprotein reductase] + O2 = 19,20-epoxy-(7Z,10Z,13Z,16Z)-docosatetraenoate + oxidized [NADPH--hemoprotein reductase] + H2O + H(+). It carries out the reaction (4Z,7Z,10Z,13Z,16Z,19Z)-docosahexaenoate + reduced [NADPH--hemoprotein reductase] + O2 = 10,11-epoxy-(4Z,7Z,13Z,16Z,19Z)-docosapentaenoate + oxidized [NADPH--hemoprotein reductase] + H2O + H(+). It catalyses the reaction (4Z,7Z,10Z,13Z,16Z,19Z)-docosahexaenoate + reduced [NADPH--hemoprotein reductase] + O2 = 13,14-epoxy-(4Z,7Z,10Z,16Z,19Z)-docosapentaenoate + oxidized [NADPH--hemoprotein reductase] + H2O + H(+). The enzyme catalyses (4Z,7Z,10Z,13Z,16Z,19Z)-docosahexaenoate + reduced [NADPH--hemoprotein reductase] + O2 = 16,17-epoxy-(4Z,7Z,10Z,13Z,19Z)-docosapentaenoate + oxidized [NADPH--hemoprotein reductase] + H2O + H(+). The catalysed reaction is (4Z,7Z,10Z,13Z,16Z,19Z)-docosahexaenoate + reduced [NADPH--hemoprotein reductase] + O2 = 19,20-epoxy-(4Z,7Z,10Z,13Z,16Z)-docosapentaenoate + oxidized [NADPH--hemoprotein reductase] + H2O + H(+). The protein operates within lipid metabolism; arachidonate metabolism. Its function is as follows. A cytochrome P450 monooxygenase involved in the metabolism of endogenous polyunsaturated fatty acids (PUFAs). Mechanistically, uses molecular oxygen inserting one oxygen atom into a substrate, and reducing the second into a water molecule, with two electrons provided by NADPH via cytochrome P450 reductase (CPR; NADPH-ferrihemoprotein reductase). Catalyzes the hydroxylation of carbon hydrogen bonds, with preference for omega-2 position. Metabolizes (5Z,8Z,11Z,14Z)-eicosatetraenoic acid (arachidonate) toward 18-hydroxy arachidonate. Catalyzes the epoxidation of double bonds of PUFAs such as docosapentaenoic and docosahexaenoic acids. Has low omega-hydroxylase activity toward leukotriene B4 and arachidonate. Involved in the metabolism of xenobiotics. Catalyzes the hydroxylation of the antihistamine drug ebastine. The sequence is that of Cytochrome P450 4F12 from Homo sapiens (Human).